Consider the following 261-residue polypeptide: Cytochrome c oxidase subunit 3 (261 aa).

Residues 1 to 15 lie on the Mitochondrial matrix side of the membrane; sequence MTHQTHSYHMVNPSP. The helical transmembrane segment at 16 to 34 threads the bilayer; it reads WPLTGALSALLMTSGLIMW. Topologically, residues 35 to 40 are mitochondrial intermembrane; the sequence is FHFNSM. The chain crosses the membrane as a helical span at residues 41 to 66; the sequence is ILLTLGLSTNILTMYQWWRDIIREST. Over 67–72 the chain is Mitochondrial matrix; sequence FQGHHT. Residues 73–105 traverse the membrane as a helical segment; that stretch reads PTVQKGLRYGMILFIVSEVLFFTGFFWAFYHSS. Residues 106–128 lie on the Mitochondrial intermembrane side of the membrane; that stretch reads LAPTPELGGCWPPTGIHPLNPLE. A helical membrane pass occupies residues 129–152; it reads VPLLNTSVLLASGVSITWAHHSLM. At 153 to 155 the chain is on the mitochondrial matrix side; it reads EGN. A helical transmembrane segment spans residues 156–183; it reads RKHMLQALFITIALGLYFTLLQASEYYE. Over 184–190 the chain is Mitochondrial intermembrane; that stretch reads APFTISD. A helical transmembrane segment spans residues 191–223; it reads GIYGSTFFVATGFHGLHVIIGSTFLIVCFLRQV. At 224–232 the chain is on the mitochondrial matrix side; sequence KFHFTSNHH. The chain crosses the membrane as a helical span at residues 233–256; that stretch reads FGFERAAWYWHFVDVVWLFLYVSI. The Mitochondrial intermembrane portion of the chain corresponds to 257–261; sequence YWWGS.

Belongs to the cytochrome c oxidase subunit 3 family. In terms of assembly, component of the cytochrome c oxidase (complex IV, CIV), a multisubunit enzyme composed of 14 subunits. The complex is composed of a catalytic core of 3 subunits MT-CO1, MT-CO2 and MT-CO3, encoded in the mitochondrial DNA, and 11 supernumerary subunits COX4I, COX5A, COX5B, COX6A, COX6B, COX6C, COX7A, COX7B, COX7C, COX8 and NDUFA4, which are encoded in the nuclear genome. The complex exists as a monomer or a dimer and forms supercomplexes (SCs) in the inner mitochondrial membrane with NADH-ubiquinone oxidoreductase (complex I, CI) and ubiquinol-cytochrome c oxidoreductase (cytochrome b-c1 complex, complex III, CIII), resulting in different assemblies (supercomplex SCI(1)III(2)IV(1) and megacomplex MCI(2)III(2)IV(2)).

The protein localises to the mitochondrion inner membrane. The enzyme catalyses 4 Fe(II)-[cytochrome c] + O2 + 8 H(+)(in) = 4 Fe(III)-[cytochrome c] + 2 H2O + 4 H(+)(out). Its function is as follows. Component of the cytochrome c oxidase, the last enzyme in the mitochondrial electron transport chain which drives oxidative phosphorylation. The respiratory chain contains 3 multisubunit complexes succinate dehydrogenase (complex II, CII), ubiquinol-cytochrome c oxidoreductase (cytochrome b-c1 complex, complex III, CIII) and cytochrome c oxidase (complex IV, CIV), that cooperate to transfer electrons derived from NADH and succinate to molecular oxygen, creating an electrochemical gradient over the inner membrane that drives transmembrane transport and the ATP synthase. Cytochrome c oxidase is the component of the respiratory chain that catalyzes the reduction of oxygen to water. Electrons originating from reduced cytochrome c in the intermembrane space (IMS) are transferred via the dinuclear copper A center (CU(A)) of subunit 2 and heme A of subunit 1 to the active site in subunit 1, a binuclear center (BNC) formed by heme A3 and copper B (CU(B)). The BNC reduces molecular oxygen to 2 water molecules using 4 electrons from cytochrome c in the IMS and 4 protons from the mitochondrial matrix. The chain is Cytochrome c oxidase subunit 3 (MT-CO3) from Balaenoptera musculus (Blue whale).